Here is a 201-residue protein sequence, read N- to C-terminus: 3-isopropylmalate dehydratase small subunit (201 aa).

Belongs to the LeuD family. LeuD type 1 subfamily. Heterodimer of LeuC and LeuD.

It catalyses the reaction (2R,3S)-3-isopropylmalate = (2S)-2-isopropylmalate. It functions in the pathway amino-acid biosynthesis; L-leucine biosynthesis; L-leucine from 3-methyl-2-oxobutanoate: step 2/4. Its function is as follows. Catalyzes the isomerization between 2-isopropylmalate and 3-isopropylmalate, via the formation of 2-isopropylmaleate. This Rhodopseudomonas palustris (strain BisB18) protein is 3-isopropylmalate dehydratase small subunit.